The following is a 224-amino-acid chain: ATP phosphoribosyltransferase (224 aa).

The protein belongs to the ATP phosphoribosyltransferase family. Short subfamily. As to quaternary structure, heteromultimer composed of HisG and HisZ subunits.

The protein localises to the cytoplasm. The catalysed reaction is 1-(5-phospho-beta-D-ribosyl)-ATP + diphosphate = 5-phospho-alpha-D-ribose 1-diphosphate + ATP. The protein operates within amino-acid biosynthesis; L-histidine biosynthesis; L-histidine from 5-phospho-alpha-D-ribose 1-diphosphate: step 1/9. Its function is as follows. Catalyzes the condensation of ATP and 5-phosphoribose 1-diphosphate to form N'-(5'-phosphoribosyl)-ATP (PR-ATP). Has a crucial role in the pathway because the rate of histidine biosynthesis seems to be controlled primarily by regulation of HisG enzymatic activity. The chain is ATP phosphoribosyltransferase from Cupriavidus necator (strain ATCC 17699 / DSM 428 / KCTC 22496 / NCIMB 10442 / H16 / Stanier 337) (Ralstonia eutropha).